Reading from the N-terminus, the 395-residue chain is Phosphoglycerate kinase (395 aa).

Substrate is bound by residues 21-23, Arg36, 59-62, Arg114, and Arg147; these read DIN and HFGR. Residues Lys197, Glu322, and 352 to 355 each bind ATP; that span reads GGDT.

Belongs to the phosphoglycerate kinase family. In terms of assembly, monomer.

The protein localises to the cytoplasm. The enzyme catalyses (2R)-3-phosphoglycerate + ATP = (2R)-3-phospho-glyceroyl phosphate + ADP. It functions in the pathway carbohydrate degradation; glycolysis; pyruvate from D-glyceraldehyde 3-phosphate: step 2/5. This chain is Phosphoglycerate kinase, found in Roseobacter denitrificans (strain ATCC 33942 / OCh 114) (Erythrobacter sp. (strain OCh 114)).